A 324-amino-acid polypeptide reads, in one-letter code: Endochitinase B (324 aa).

An N-terminal signal peptide occupies residues 1–23 (MRLREFTALSSLLFSLLLLSASA). Positions 24 to 65 (EQCGSQAGGARCASGLCCSKFGWCGNTNDYCGPGNCQSQCPG) constitute a Chitin-binding type-1 domain. Disulfide bonds link Cys26–Cys41, Cys35–Cys47, Cys40–Cys54, and Cys59–Cys63. 4-hydroxyproline occurs at positions 67 and 69. Intrachain disulfides connect Cys96–Cys158, Cys170–Cys178, and Cys277–Cys309. Glu140 acts as the Proton donor in catalysis. The propeptide at 318–324 (GLLVDTM) is removed in mature form.

The protein belongs to the glycosyl hydrolase 19 family. Chitinase class I subfamily. In terms of processing, the 4-hydroxyproline residues are not glycosylated in this plant vacuolar protein.

Its subcellular location is the vacuole. The enzyme catalyses Random endo-hydrolysis of N-acetyl-beta-D-glucosaminide (1-&gt;4)-beta-linkages in chitin and chitodextrins.. Defense against chitin-containing fungal pathogens. In Nicotiana tabacum (Common tobacco), this protein is Endochitinase B (CHN50).